Consider the following 133-residue polypeptide: MHVSSLKVVLFGVCCLSLAACQTPAPVKNTASRSAASVPANEQISQLASLVAASKYLRVQCERSDLPDDGTILKTAVNVAVQKGWDTGRYQSLPQLSENLYQGLLKDGTPKATQCSSFNRTMTPFLDAMRTVR.

The signal sequence occupies residues Met1–Ala20. Cys21 carries the N-palmitoyl cysteine lipid modification. The S-diacylglycerol cysteine moiety is linked to residue Cys21. An intrachain disulfide couples Cys61 to Cys115.

It to K.pneumoniae PulS. In terms of assembly, interacts with secretin OutD.

The protein resides in the cell outer membrane. Functionally, out proteins are required for the translocation of pectate lyases and cellulases across the outer membrane. The polypeptide is Pilotin OutS (outS) (Dickeya dadantii (strain 3937) (Erwinia chrysanthemi (strain 3937))).